The chain runs to 140 residues: Ribonuclease P protein component (140 aa).

Belongs to the RnpA family. In terms of assembly, consists of a catalytic RNA component (M1 or rnpB) and a protein subunit.

It catalyses the reaction Endonucleolytic cleavage of RNA, removing 5'-extranucleotides from tRNA precursor.. Functionally, RNaseP catalyzes the removal of the 5'-leader sequence from pre-tRNA to produce the mature 5'-terminus. It can also cleave other RNA substrates such as 4.5S RNA. The protein component plays an auxiliary but essential role in vivo by binding to the 5'-leader sequence and broadening the substrate specificity of the ribozyme. This is Ribonuclease P protein component from Nostoc sp. (strain PCC 7120 / SAG 25.82 / UTEX 2576).